The following is a 627-amino-acid chain: 1-deoxy-D-xylulose-5-phosphate synthase (627 aa).

Thiamine diphosphate-binding positions include His80 and 121–123; that span reads GHS. Mg(2+) is bound at residue Asp152. Thiamine diphosphate contacts are provided by residues 153-154, Asn181, Tyr288, and Glu370; that span reads GA. Asn181 serves as a coordination point for Mg(2+).

The protein belongs to the transketolase family. DXPS subfamily. Homodimer. Mg(2+) serves as cofactor. Requires thiamine diphosphate as cofactor.

It carries out the reaction D-glyceraldehyde 3-phosphate + pyruvate + H(+) = 1-deoxy-D-xylulose 5-phosphate + CO2. It functions in the pathway metabolic intermediate biosynthesis; 1-deoxy-D-xylulose 5-phosphate biosynthesis; 1-deoxy-D-xylulose 5-phosphate from D-glyceraldehyde 3-phosphate and pyruvate: step 1/1. Functionally, catalyzes the acyloin condensation reaction between C atoms 2 and 3 of pyruvate and glyceraldehyde 3-phosphate to yield 1-deoxy-D-xylulose-5-phosphate (DXP). This chain is 1-deoxy-D-xylulose-5-phosphate synthase, found in Aliivibrio salmonicida (strain LFI1238) (Vibrio salmonicida (strain LFI1238)).